Reading from the N-terminus, the 101-residue chain is Large ribosomal subunit protein uL24 (101 aa).

The protein belongs to the universal ribosomal protein uL24 family. As to quaternary structure, part of the 50S ribosomal subunit.

One of two assembly initiator proteins, it binds directly to the 5'-end of the 23S rRNA, where it nucleates assembly of the 50S subunit. Its function is as follows. One of the proteins that surrounds the polypeptide exit tunnel on the outside of the subunit. The polypeptide is Large ribosomal subunit protein uL24 (Streptococcus thermophilus (strain CNRZ 1066)).